The following is a 372-amino-acid chain: Cytochrome b (372 aa).

The next 4 membrane-spanning stretches (helical) occupy residues 25–45, 69–90, 105–125, and 170–190; these read FGSM…FLAI, WIMQ…YIHI, WLSG…GYVL, and FFAL…IHII. Residues His75 and His89 each contribute to the heme b site. His174 and His188 together coordinate heme b. Residue His193 participates in a ubiquinone binding. Helical transmembrane passes span 218 to 238, 280 to 300, 312 to 332, and 339 to 358; these read YKDM…LSFS, LGGT…PFTH, LTQT…WTAT, and FISI…IINP.

It belongs to the cytochrome b family. The cytochrome bc1 complex contains 3 respiratory subunits (MT-CYB, CYC1 and UQCRFS1), 2 core proteins (UQCRC1 and UQCRC2) and probably 6 low-molecular weight proteins. Requires heme b as cofactor.

The protein resides in the mitochondrion inner membrane. Its function is as follows. Component of the ubiquinol-cytochrome c reductase complex (complex III or cytochrome b-c1 complex) that is part of the mitochondrial respiratory chain. The b-c1 complex mediates electron transfer from ubiquinol to cytochrome c. Contributes to the generation of a proton gradient across the mitochondrial membrane that is then used for ATP synthesis. The sequence is that of Cytochrome b (MT-CYB) from Dendroaspis polylepis polylepis (Black mamba).